Reading from the N-terminus, the 112-residue chain is U15-hexatoxin-Hi1a (112 aa).

The signal sequence occupies residues 1–18 (MNTLIAFAVLLLLSTTLG). A propeptide spanning residues 19 to 73 (DTDDKVSHEEIQERKELSGISEELLLQQLEAVEAALMEKERLEEMEEDGNSREKR) is cleaved from the precursor. Disulfide bonds link C74–C88, C81–C93, and C87–C107.

The protein belongs to the neurotoxin 14 (magi-1) family. 08 (Ltx-4) subfamily. Expressed by the venom gland.

Its subcellular location is the secreted. Functionally, probable ion channel inhibitor. The polypeptide is U15-hexatoxin-Hi1a (Hadronyche infensa (Fraser island funnel-web spider)).